A 469-amino-acid polypeptide reads, in one-letter code: MSEWDYKIFWDEAVNQFKEELAFSIFSMWFLPSKYEKSTENTVYLSVPSKFFRDQMIHNYKNGIEKKLFELSGKKISIDFIIKPNTSEDLSKAENEGGNDKKEDAAKPSSAESKKKSVKTEGGRGQHPDLRPEYNFEDFVVGPNNNFGVNAAIAVSTNPGSAYNPFLIYGGVGLGKTHLMQAIGNKIWDTTKLKVIYVTAENFTNEFVECVQKKMMPAFKSKYRKADVLLIDDIHFFQGKVETQEELFHTFNELYEKNKQIVFTCDRPPAELKNLSQRLKSRFERGLNVDLQTPAYEIRYAILLKKMEKHSTKIPNEFIDMVAKNVSSNVRDLEAALTKLIAYTELTKKTMDEATAKNLLRDIFGSTRQRNVTIDLIQRTVADYFSISISDIKSKKRTKSFSFPRQIAMFLCREMTECSTTELGNDFGGRDHTTILHGCNKIEEQIAADPSLEKIIHELRNTIKENTNK.

The domain I, interacts with DnaA modulators stretch occupies residues Met-1–Lys-83. The segment at Lys-83–Pro-128 is domain II. The tract at residues Asp-89–Arg-131 is disordered. A domain III, AAA+ region region spans residues Asp-129 to Thr-344. ATP is bound by residues Gly-173, Gly-175, Lys-176, and Thr-177. Residues Glu-345–Lys-469 form a domain IV, binds dsDNA region.

This sequence belongs to the DnaA family. Oligomerizes as a right-handed, spiral filament on DNA at oriC.

The protein resides in the cytoplasm. Plays an essential role in the initiation and regulation of chromosomal replication. ATP-DnaA binds to the origin of replication (oriC) to initiate formation of the DNA replication initiation complex once per cell cycle. Binds the DnaA box (a 9 base pair repeat at the origin) and separates the double-stranded (ds)DNA. Forms a right-handed helical filament on oriC DNA; dsDNA binds to the exterior of the filament while single-stranded (ss)DNA is stabiized in the filament's interior. The ATP-DnaA-oriC complex binds and stabilizes one strand of the AT-rich DNA unwinding element (DUE), permitting loading of DNA polymerase. After initiation quickly degrades to an ADP-DnaA complex that is not apt for DNA replication. Binds acidic phospholipids. This chain is Chromosomal replication initiator protein DnaA, found in Treponema denticola (strain ATCC 35405 / DSM 14222 / CIP 103919 / JCM 8153 / KCTC 15104).